A 113-amino-acid chain; its full sequence is Large ribosomal subunit protein bL19 (113 aa).

It belongs to the bacterial ribosomal protein bL19 family.

Its function is as follows. This protein is located at the 30S-50S ribosomal subunit interface and may play a role in the structure and function of the aminoacyl-tRNA binding site. This is Large ribosomal subunit protein bL19 from Nocardia farcinica (strain IFM 10152).